The chain runs to 515 residues: Maturase K (515 aa).

Belongs to the intron maturase 2 family. MatK subfamily.

It localises to the plastid. It is found in the chloroplast. Functionally, usually encoded in the trnK tRNA gene intron. Probably assists in splicing its own and other chloroplast group II introns. The protein is Maturase K of Pinus cembra (Swiss stone pine).